A 363-amino-acid polypeptide reads, in one-letter code: Chorismate synthase (363 aa).

2 residues coordinate NADP(+): Arg-47 and Arg-53. FMN-binding positions include 124–126 (RSS), Gly-286, 301–305 (KPTAT), and Arg-327.

Belongs to the chorismate synthase family. In terms of assembly, homotetramer. The cofactor is FMNH2.

It catalyses the reaction 5-O-(1-carboxyvinyl)-3-phosphoshikimate = chorismate + phosphate. It functions in the pathway metabolic intermediate biosynthesis; chorismate biosynthesis; chorismate from D-erythrose 4-phosphate and phosphoenolpyruvate: step 7/7. Functionally, catalyzes the anti-1,4-elimination of the C-3 phosphate and the C-6 proR hydrogen from 5-enolpyruvylshikimate-3-phosphate (EPSP) to yield chorismate, which is the branch point compound that serves as the starting substrate for the three terminal pathways of aromatic amino acid biosynthesis. This reaction introduces a second double bond into the aromatic ring system. This is Chorismate synthase from Thermosynechococcus vestitus (strain NIES-2133 / IAM M-273 / BP-1).